The chain runs to 407 residues: Phosphopentomutase (407 aa).

Mn(2+)-binding residues include D10, D307, H312, D348, H349, and H360.

It belongs to the phosphopentomutase family. Requires Mn(2+) as cofactor.

It localises to the cytoplasm. The enzyme catalyses 2-deoxy-alpha-D-ribose 1-phosphate = 2-deoxy-D-ribose 5-phosphate. The catalysed reaction is alpha-D-ribose 1-phosphate = D-ribose 5-phosphate. Its pathway is carbohydrate degradation; 2-deoxy-D-ribose 1-phosphate degradation; D-glyceraldehyde 3-phosphate and acetaldehyde from 2-deoxy-alpha-D-ribose 1-phosphate: step 1/2. Functionally, isomerase that catalyzes the conversion of deoxy-ribose 1-phosphate (dRib-1-P) and ribose 1-phosphate (Rib-1-P) to deoxy-ribose 5-phosphate (dRib-5-P) and ribose 5-phosphate (Rib-5-P), respectively. This chain is Phosphopentomutase, found in Methylobacterium nodulans (strain LMG 21967 / CNCM I-2342 / ORS 2060).